Here is a 220-residue protein sequence, read N- to C-terminus: Uracil-DNA glycosylase (220 aa).

Asp-65 functions as the Proton acceptor in the catalytic mechanism.

Belongs to the uracil-DNA glycosylase (UDG) superfamily. UNG family.

The protein localises to the cytoplasm. It carries out the reaction Hydrolyzes single-stranded DNA or mismatched double-stranded DNA and polynucleotides, releasing free uracil.. Its function is as follows. Excises uracil residues from the DNA which can arise as a result of misincorporation of dUMP residues by DNA polymerase or due to deamination of cytosine. The protein is Uracil-DNA glycosylase of Leuconostoc mesenteroides subsp. mesenteroides (strain ATCC 8293 / DSM 20343 / BCRC 11652 / CCM 1803 / JCM 6124 / NCDO 523 / NBRC 100496 / NCIMB 8023 / NCTC 12954 / NRRL B-1118 / 37Y).